We begin with the raw amino-acid sequence, 140 residues long: Acyl-coenzyme A thioesterase PaaI (140 aa).

In terms of assembly, homotetramer.

Its pathway is aromatic compound metabolism; phenylacetate degradation. In terms of biological role, thioesterase with a preference for ring-hydroxylated phenylacetyl-CoA esters. Hydrolyzes 3,4-dihydroxyphenylacetyl-CoA, 3-hydroxyphenylacetyl-CoA and 4-hydroxyphenylacetyl-CoA. Inactive towards 4-hydroxybenzoyl-CoA and 4-hydroxyphenacyl-CoA. This chain is Acyl-coenzyme A thioesterase PaaI (paaI), found in Escherichia coli (strain K12).